A 492-amino-acid polypeptide reads, in one-letter code: KAT8 regulatory NSL complex subunit 2 (492 aa).

K78 is covalently cross-linked (Glycyl lysine isopeptide (Lys-Gly) (interchain with G-Cter in SUMO2)). A disordered region spans residues 126 to 182 (ELGSQTPESSRSEASRILDEDSWSDGEQEPITVDQTWRGDPDSEADSIDRDQEDPLK). The residue at position 131 (T131) is a Phosphothreonine. Basic and acidic residues predominate over residues 135 to 144 (SRSEASRILD). Phosphoserine is present on residues S147, S149, S168, and S172. The span at 162–182 (WRGDPDSEADSIDRDQEDPLK) shows a compositional bias: basic and acidic residues. Residues 308 to 364 (DVRCSNQSLPMTRHCLTHICQDTNRVLFKCCQGSEEVPCNKPVPVSLSEDPCCPLHF) are required for interaction with other NSL complex members. The segment at 453–492 (QMAGDGCRSQGPRNSEKAPAPLSQSGIATANGKPEPTSVS) is disordered.

In terms of assembly, component of the NSL complex at least composed of KAT8/MOF, KANSL1, KANSL2, KANSL3, MCRS1, PHF20, OGT1/OGT, WDR5 and HCFC1. Ubiquitously expressed.

Its subcellular location is the nucleus. It localises to the mitochondrion. In terms of biological role, non-catalytic component of the NSL histone acetyltransferase complex, a multiprotein complex that mediates histone H4 acetylation at 'Lys-5'- and 'Lys-8' (H4K5ac and H4K8ac) at transcription start sites and promotes transcription initiation. Required for NSL complex stability and for transcription of intraciliary transport genes in both ciliated and non-ciliated cells by regulating histone H4 acetylation at 'Lys-5'- and 'Lys-12' (H4K5ac and H4K12ac). This is necessary for cilium assembly in ciliated cells and for organization of the microtubule cytoskeleton in non-ciliated cells. Required within the NSL complex to maintain nuclear architecture stability by promoting KAT8-mediated acetylation of lamin LMNA. This chain is KAT8 regulatory NSL complex subunit 2 (KANSL2), found in Capra hircus (Goat).